We begin with the raw amino-acid sequence, 608 residues long: Isocitrate dehydrogenase kinase/phosphatase (608 aa).

Residues 328 to 334 and Lys349 contribute to the ATP site; that span reads APGIKGL. Asp384 is a catalytic residue.

It belongs to the AceK family.

Its subcellular location is the cytoplasm. It catalyses the reaction L-seryl-[isocitrate dehydrogenase] + ATP = O-phospho-L-seryl-[isocitrate dehydrogenase] + ADP + H(+). Functionally, bifunctional enzyme which can phosphorylate or dephosphorylate isocitrate dehydrogenase (IDH) on a specific serine residue. This is a regulatory mechanism which enables bacteria to bypass the Krebs cycle via the glyoxylate shunt in response to the source of carbon. When bacteria are grown on glucose, IDH is fully active and unphosphorylated, but when grown on acetate or ethanol, the activity of IDH declines drastically concomitant with its phosphorylation. The polypeptide is Isocitrate dehydrogenase kinase/phosphatase (Cupriavidus pinatubonensis (strain JMP 134 / LMG 1197) (Cupriavidus necator (strain JMP 134))).